Reading from the N-terminus, the 195-residue chain is Interferon omega-1 (195 aa).

Residues 1–23 (MAFSVSSLMALVVISSSPVSSMS) form the signal peptide. Cystine bridges form between Cys-24-Cys-122 and Cys-52-Cys-162. Asn-101 carries an N-linked (GlcNAc...) asparagine glycan.

This sequence belongs to the alpha/beta interferon family.

Its subcellular location is the secreted. In Equus caballus (Horse), this protein is Interferon omega-1.